Reading from the N-terminus, the 428-residue chain is Isocitrate dehydrogenase [NADP], mitochondrial (428 aa).

A mitochondrion-targeting transit peptide spans methionine 1–alanine 16. NADP(+)-binding positions include threonine 91–threonine 93 and arginine 98. Threonine 93 is a binding site for substrate. Substrate-binding positions include serine 110–arginine 116, arginine 125, and arginine 148. Aspartate 269 contributes to the Mn(2+) binding site. Position 277 (lysine 277) interacts with NADP(+). Aspartate 292 provides a ligand contact to Mn(2+). Residues glycine 327–histidine 332 and asparagine 345 contribute to the NADP(+) site.

This sequence belongs to the isocitrate and isopropylmalate dehydrogenases family. As to quaternary structure, homodimer. Mg(2+) is required as a cofactor. Requires Mn(2+) as cofactor.

Its subcellular location is the mitochondrion. The catalysed reaction is D-threo-isocitrate + NADP(+) = 2-oxoglutarate + CO2 + NADPH. With respect to regulation, the enzyme is subject to end product inhibition by NADPH and 2-oxoglutarate. Its function is as follows. Mitochondrial IDP1 may regulate flux through the tricarboxylic acid cycle and respiration. Its probably critical function is the production of NADPH. The sequence is that of Isocitrate dehydrogenase [NADP], mitochondrial (IDP1) from Saccharomyces cerevisiae (strain ATCC 204508 / S288c) (Baker's yeast).